The chain runs to 249 residues: Probable transcriptional regulatory protein Tgr7_2237 (249 aa).

Belongs to the TACO1 family.

Its subcellular location is the cytoplasm. The protein is Probable transcriptional regulatory protein Tgr7_2237 of Thioalkalivibrio sulfidiphilus (strain HL-EbGR7).